The primary structure comprises 235 residues: Phosphoribosylaminoimidazole-succinocarboxamide synthase (235 aa).

Belongs to the SAICAR synthetase family.

It carries out the reaction 5-amino-1-(5-phospho-D-ribosyl)imidazole-4-carboxylate + L-aspartate + ATP = (2S)-2-[5-amino-1-(5-phospho-beta-D-ribosyl)imidazole-4-carboxamido]succinate + ADP + phosphate + 2 H(+). It participates in purine metabolism; IMP biosynthesis via de novo pathway; 5-amino-1-(5-phospho-D-ribosyl)imidazole-4-carboxamide from 5-amino-1-(5-phospho-D-ribosyl)imidazole-4-carboxylate: step 1/2. This is Phosphoribosylaminoimidazole-succinocarboxamide synthase from Streptococcus mutans serotype c (strain ATCC 700610 / UA159).